Here is a 1038-residue protein sequence, read N- to C-terminus: Protein transport protein SEC24 A (1038 aa).

Residues 1–247 are disordered; sequence MGTENQGYPN…PPHTGGFAQR (247 aa). A compositionally biased stretch (pro residues) spans 22-33; the sequence is SAPPPGIPPQSG. C371, C374, C393, and C396 together coordinate Zn(2+). Positions 371 to 396 are zinc finger-like; that stretch reads CRRCRTYVNPFVTFTDSGRKWRCNIC.

Belongs to the SEC23/SEC24 family. SEC24 subfamily. As to quaternary structure, component of the coat protein complex II (COPII), composed of at least five proteins: the Sec23/24 complex, the Sec13/31 complex and Sar1. Interacts with SEC221, SEC23E/SEC23A, SEC23B, SEC23G/SEC23C and SEC23F/SEC23D. In terms of assembly, (Microbial infection) Interacts with turnip mosaic virus (TuMV) 6K2 in COPII-coated vesicles. As to expression, mainly expressed in pollen, leaves, inflorescences, roots and stems, and, to a lower extent, in cotyledons, petioles and hypocotyls.

The protein resides in the cytoplasmic vesicle. It is found in the COPII-coated vesicle membrane. The protein localises to the endoplasmic reticulum membrane. It localises to the golgi apparatus membrane. Its subcellular location is the cytoplasm. The protein resides in the cytosol. Its function is as follows. Essential protein. Component of the coat protein complex II (COPII), that covers ER-derived vesicles involved in transport from the endoplasmic reticulum to the Golgi apparatus. COPII is composed of at least five proteins: the SEC23/24 complex, the SEC13/31 complex, and the protein SAR1. Acts in the cytoplasm to promote the transport of secretory, plasma membrane, and vacuolar proteins from the endoplasmic reticulum to the Golgi complex. Involved in maintaining the dynamic identity of organelles of the early secretory pathway. Regulates cell size patterning, and prevents CDKA;1-, DEK1- and ACR4-dependent endoreduplication and giant cells formation in sepals. Required for male gametophytes (pollen grains) development and transmission. Functionally, (Microbial infection) Contributes to viral systemic infection of turnip mosaic virus (TuMV) by triggering the formation of host endoplasmic reticulum (ER)-derived viral vesicles that carry the viral RNA (vRNA) to plasmodesmata for cell-to-cell viral movement. The chain is Protein transport protein SEC24 A from Arabidopsis thaliana (Mouse-ear cress).